Consider the following 843-residue polypeptide: Receptor-like serine/threonine-protein kinase SD1-7 (843 aa).

The signal sequence occupies residues 1–31 (MRSVPNYHHSFFIFLILILFLAFSVSPNTLS). One can recognise a Bulb-type lectin domain in the interval 32–151 (ATESLTISSN…NNRLLWQSFD (120 aa)). Topologically, residues 32-435 (ATESLTISSN…LEDKRIKNEK (404 aa)) are extracellular. Asn41, Asn92, Asn116, Asn236, and Asn251 each carry an N-linked (GlcNAc...) asparagine glycan. The 37-residue stretch at 286 to 322 (PKDLCDNYKVCGNFGYCDSNSLPNCYCIKGFKPVNEQ) folds into the EGF-like; atypical domain. 4 disulfide bridges follow: Cys290/Cys302, Cys296/Cys310, Cys372/Cys397, and Cys376/Cys382. In terms of domain architecture, PAN spans 341-422 (CDGRDGFTRL…GGQDLYVRLA (82 aa)). N-linked (GlcNAc...) asparagine glycosylation occurs at Asn381. The helical transmembrane segment at 436 to 456 (IIGSSIGVSILLLLSFVIFHF) threads the bilayer. Over 457–843 (WKRKQKRSIT…QITLSVIDAR (387 aa)) the chain is Cytoplasmic. Residues 519 to 809 (FSNDNKLGQG…AIPQPKRPGF (291 aa)) form the Protein kinase domain. ATP is bound by residues 525–533 (LGQGGFGIV) and Lys547. The residue at position 553 (Ser553) is a Phosphoserine. Residues 608–625 (TRSSNLNWQKRFDIINGI) form a caM-binding region. The active-site Proton acceptor is the Asp644. Ser648 and Ser661 each carry phosphoserine. Residue Thr678 is modified to Phosphothreonine. Phosphoserine is present on Ser820.

The protein belongs to the protein kinase superfamily. Ser/Thr protein kinase family. As to quaternary structure, interacts with PUB9, PUB13, PUB14 and PUB38. Autophosphorylated on serine and threonine residues. In terms of tissue distribution, mostly expressed in leaves, and, to a lower extent, in stems and flower buds.

The protein localises to the cell membrane. The catalysed reaction is L-seryl-[protein] + ATP = O-phospho-L-seryl-[protein] + ADP + H(+). It carries out the reaction L-threonyl-[protein] + ATP = O-phospho-L-threonyl-[protein] + ADP + H(+). Involved in the regulation of cellular expansion and differentiation. Mediates subcellular relocalization of PUB9 from nucleus to plasma membrane in a protein-phosphorylation-dependent manner. May be involved in the abscisic acid-mediated signaling pathway, at least during germination. This is Receptor-like serine/threonine-protein kinase SD1-7 (SD17) from Arabidopsis thaliana (Mouse-ear cress).